The sequence spans 418 residues: Light-independent protochlorophyllide reductase subunit N (418 aa).

Positions 17, 42, and 103 each coordinate [4Fe-4S] cluster.

The protein belongs to the BchN/ChlN family. Protochlorophyllide reductase is composed of three subunits; ChlL, ChlN and ChlB. Forms a heterotetramer of two ChlB and two ChlN subunits. Requires [4Fe-4S] cluster as cofactor.

The enzyme catalyses chlorophyllide a + oxidized 2[4Fe-4S]-[ferredoxin] + 2 ADP + 2 phosphate = protochlorophyllide a + reduced 2[4Fe-4S]-[ferredoxin] + 2 ATP + 2 H2O. It participates in porphyrin-containing compound metabolism; chlorophyll biosynthesis (light-independent). Component of the dark-operative protochlorophyllide reductase (DPOR) that uses Mg-ATP and reduced ferredoxin to reduce ring D of protochlorophyllide (Pchlide) to form chlorophyllide a (Chlide). This reaction is light-independent. The NB-protein (ChlN-ChlB) is the catalytic component of the complex. The protein is Light-independent protochlorophyllide reductase subunit N of Prochlorococcus marinus (strain NATL2A).